A 260-amino-acid chain; its full sequence is Electron transfer flavoprotein subunit beta (260 aa).

Belongs to the ETF beta-subunit/FixA family. Heterodimer of an alpha and a beta subunit. It depends on FAD as a cofactor. Requires AMP as cofactor.

Functionally, the electron transfer flavoprotein serves as a specific electron acceptor for other dehydrogenases. It transfers the electrons to the main respiratory chain via ETF-ubiquinone oxidoreductase (ETF dehydrogenase). This chain is Electron transfer flavoprotein subunit beta (etfB), found in Thermoanaerobacterium thermosaccharolyticum (strain ATCC 7956 / DSM 571 / NCIMB 9385 / NCA 3814 / NCTC 13789 / WDCM 00135 / 2032) (Clostridium thermosaccharolyticum).